The chain runs to 211 residues: Transcription factor E (211 aa).

Positions 10–130 (GNPAIYQYLL…LWLMRMDHMN (121 aa)) constitute an HTH TFE/IIEalpha-type domain.

This sequence belongs to the TFE family. Monomer. Interaction with RNA polymerase subunits RpoF and RpoE is necessary for Tfe stimulatory transcription activity. Able to interact with Tbp and RNA polymerase in the absence of DNA promoter. Interacts both with the preinitiation and elongation complexes.

In terms of biological role, transcription factor that plays a role in the activation of archaeal genes transcribed by RNA polymerase. Facilitates transcription initiation by enhancing TATA-box recognition by TATA-box-binding protein (Tbp), and transcription factor B (Tfb) and RNA polymerase recruitment. Not absolutely required for transcription in vitro, but particularly important in cases where Tbp or Tfb function is not optimal. It dynamically alters the nucleic acid-binding properties of RNA polymerases by stabilizing the initiation complex and destabilizing elongation complexes. Seems to translocate with the RNA polymerase following initiation and acts by binding to the non template strand of the transcription bubble in elongation complexes. The protein is Transcription factor E of Methanocorpusculum labreanum (strain ATCC 43576 / DSM 4855 / Z).